A 96-amino-acid polypeptide reads, in one-letter code: Putative pterin-4-alpha-carbinolamine dehydratase (96 aa).

This sequence belongs to the pterin-4-alpha-carbinolamine dehydratase family.

The enzyme catalyses (4aS,6R)-4a-hydroxy-L-erythro-5,6,7,8-tetrahydrobiopterin = (6R)-L-erythro-6,7-dihydrobiopterin + H2O. This is Putative pterin-4-alpha-carbinolamine dehydratase from Brucella anthropi (strain ATCC 49188 / DSM 6882 / CCUG 24695 / JCM 21032 / LMG 3331 / NBRC 15819 / NCTC 12168 / Alc 37) (Ochrobactrum anthropi).